The chain runs to 359 residues: E2F transcription factor-like E2FD (359 aa).

2 consecutive DNA-binding regions follow at residues 13 to 78 (RKDK…SWKG) and 138 to 217 (RKER…RWLG). 2 disordered regions span residues 255-274 (RNKS…QNTS) and 288-313 (DVKN…NNIR). The segment covering 293–309 (ASGSSTPAGTSESNDMG) has biased composition (polar residues).

The protein belongs to the E2F/DP family. Monomer. No interactions with DPA or E2FA. As to expression, preferentially expressed in proliferating tissues. Highly expressed in young stalk and young flowers. Lower expression in young leaves and mature flowers. Detected in cotyledonary vascular tissues, the shoot apical meristem, the base of trichomes, the fully developed stomata, the central root cylinder and in the columella of lateral roots but not in the primary root tips or in the leaf epidermal cells.

It localises to the nucleus. In terms of biological role, inhibitor of E2F-dependent regulation of gene expression. Binds specifically the E2 recognition site as a monomer without interacting with DP proteins. May be up-regulating E2FA and down-regulating repressors of cell cycle progression. Promotes cell proliferation and represses cell elongation. Regulated by proteolysis via a ubiquitin-proteasome pathway. The chain is E2F transcription factor-like E2FD (E2FD) from Arabidopsis thaliana (Mouse-ear cress).